A 124-amino-acid polypeptide reads, in one-letter code: Large ribosomal subunit protein uL22 (124 aa).

This sequence belongs to the universal ribosomal protein uL22 family. Part of the 50S ribosomal subunit.

This protein binds specifically to 23S rRNA; its binding is stimulated by other ribosomal proteins, e.g. L4, L17, and L20. It is important during the early stages of 50S assembly. It makes multiple contacts with different domains of the 23S rRNA in the assembled 50S subunit and ribosome. Its function is as follows. The globular domain of the protein is located near the polypeptide exit tunnel on the outside of the subunit, while an extended beta-hairpin is found that lines the wall of the exit tunnel in the center of the 70S ribosome. The chain is Large ribosomal subunit protein uL22 from Buchnera aphidicola subsp. Cinara cedri (strain Cc).